The sequence spans 511 residues: Ent-copalyl diphosphate synthase (511 aa).

A divalent metal cation contacts are provided by D291 and D293. The short motif at 291 to 294 (DSDD) is the DXDD motif element.

The protein belongs to the terpene synthase family. Homodimer. The cofactor is a divalent metal cation.

It carries out the reaction (2E,6E,10E)-geranylgeranyl diphosphate = ent-copalyl diphosphate. Its pathway is antibiotic biosynthesis. Involved in viguiepinol biosynthesis. Catalyzes the conversion of geranylgeranyl diphosphate (GGDP) into copalyl diphosphate (ent-CDP). This chain is Ent-copalyl diphosphate synthase, found in Streptomyces sp. (strain KO-3988).